The following is a 157-amino-acid chain: Ribosome maturation factor RimP (157 aa).

Belongs to the RimP family.

The protein resides in the cytoplasm. Functionally, required for maturation of 30S ribosomal subunits. In Geobacillus kaustophilus (strain HTA426), this protein is Ribosome maturation factor RimP.